The chain runs to 351 residues: Sesquiterpene synthase 14 (351 aa).

The Mg(2+) site is built by D87, N223, S227, and E231. Residues 87 to 91 (DEYTD) carry the DDXXD motif motif. The NSE/DTE motif motif lies at 223–231 (NDIASYNKE). R312 and Y313 together coordinate (2E,6E)-farnesyl diphosphate.

This sequence belongs to the terpene synthase family. Mg(2+) is required as a cofactor.

It catalyses the reaction (2E,6E)-farnesyl diphosphate = pentalenene + diphosphate. Its function is as follows. Terpene cyclase that catalyzes the cyclization of farnesyl diphosphate (FPP) to pentalenene as a major product, as well as caryophyllene. The protein is Sesquiterpene synthase 14 of Postia placenta (strain ATCC 44394 / Madison 698-R) (Brown rot fungus).